The primary structure comprises 205 residues: Latherin (205 aa).

A disulfide bond links cysteine 133 and cysteine 176.

This sequence belongs to the BPI/LBP/Plunc superfamily. Plunc family. In terms of assembly, monomer.

Its subcellular location is the secreted. In terms of biological role, major protein in sweat, has surfactant properties. The protein is Latherin (LATH) of Equus quagga burchellii (Burchell's zebra).